A 366-amino-acid polypeptide reads, in one-letter code: tRNA 2-selenouridine synthase (366 aa).

Residues 12–135 (FLNDVPMMDA…MRTFLLDTLH (124 aa)) enclose the Rhodanese domain. The active-site S-selanylcysteine intermediate is the cysteine 95.

It belongs to the SelU family. As to quaternary structure, monomer.

The catalysed reaction is 5-methylaminomethyl-2-thiouridine(34) in tRNA + selenophosphate + (2E)-geranyl diphosphate + H2O + H(+) = 5-methylaminomethyl-2-selenouridine(34) in tRNA + (2E)-thiogeraniol + phosphate + diphosphate. The enzyme catalyses 5-methylaminomethyl-2-thiouridine(34) in tRNA + (2E)-geranyl diphosphate = 5-methylaminomethyl-S-(2E)-geranyl-thiouridine(34) in tRNA + diphosphate. It catalyses the reaction 5-methylaminomethyl-S-(2E)-geranyl-thiouridine(34) in tRNA + selenophosphate + H(+) = 5-methylaminomethyl-2-(Se-phospho)selenouridine(34) in tRNA + (2E)-thiogeraniol. It carries out the reaction 5-methylaminomethyl-2-(Se-phospho)selenouridine(34) in tRNA + H2O = 5-methylaminomethyl-2-selenouridine(34) in tRNA + phosphate. Involved in the post-transcriptional modification of the uridine at the wobble position (U34) of tRNA(Lys), tRNA(Glu) and tRNA(Gln). Catalyzes the conversion of 2-thiouridine (S2U-RNA) to 2-selenouridine (Se2U-RNA). Acts in a two-step process involving geranylation of 2-thiouridine (S2U) to S-geranyl-2-thiouridine (geS2U) and subsequent selenation of the latter derivative to 2-selenouridine (Se2U) in the tRNA chain. The chain is tRNA 2-selenouridine synthase from Pseudomonas savastanoi pv. phaseolicola (strain 1448A / Race 6) (Pseudomonas syringae pv. phaseolicola (strain 1448A / Race 6)).